The chain runs to 154 residues: Universal stress protein Sll1388 (154 aa).

It belongs to the universal stress protein A family.

The polypeptide is Universal stress protein Sll1388 (Synechocystis sp. (strain ATCC 27184 / PCC 6803 / Kazusa)).